The sequence spans 252 residues: Flap endonuclease Xni (252 aa).

Mg(2+) is bound at residue Asp105. The 5'-3' exonuclease domain occupies 161–251 (VESTQFIDYL…NVNLKQFRIE (91 aa)). The K(+) site is built by Leu172, Ala173, Pro181, Val183, and Ile186. The tract at residues 185-190 (GIGPKS) is interaction with DNA.

It belongs to the Xni family. Mg(2+) serves as cofactor. It depends on K(+) as a cofactor.

In terms of biological role, has flap endonuclease activity. During DNA replication, flap endonucleases cleave the 5'-overhanging flap structure that is generated by displacement synthesis when DNA polymerase encounters the 5'-end of a downstream Okazaki fragment. This chain is Flap endonuclease Xni, found in Shewanella halifaxensis (strain HAW-EB4).